The sequence spans 337 residues: Metacaspase III c (337 aa).

Propeptides lie at residues 1-6 (MGFLRR) and 116-125 (VPPAATGTRR). Cysteine sulfenic acid (-SOH) is present on Cys202. Cys202 and Cys259 are oxidised to a cystine. The active site involves His207. The Ca(2+) site is built by Asp224, Asp240, and Asp241. The active site involves Cys264. Position 271 (Asp271) interacts with Ca(2+). A propeptide spanning residues 290 to 337 (NFDFKKLLGKFGIDDFDKFGGEALGKINGDALGKVGKDALGKLNKFFG) is cleaved from the precursor.

This sequence belongs to the peptidase C14B family. Auto-proteolytic cleavage into a large and a small subunit which probably remain associated by non-covalent bonds. Post-translationally, following oxidative stress, the oxidation of Cys-202 leads to the formation of a disulfide bond between Cys-202 and Cys-259 which enhances catalytic activity.

With respect to regulation, activated by Ca(2+). Its function is as follows. Cysteine protease that cleaves specifically after arginine residues. This is Metacaspase III c from Phaeodactylum tricornutum (strain CCAP 1055/1).